The primary structure comprises 232 residues: Aspartate/glutamate leucyltransferase (232 aa).

The protein belongs to the R-transferase family. Bpt subfamily.

It localises to the cytoplasm. The enzyme catalyses N-terminal L-glutamyl-[protein] + L-leucyl-tRNA(Leu) = N-terminal L-leucyl-L-glutamyl-[protein] + tRNA(Leu) + H(+). The catalysed reaction is N-terminal L-aspartyl-[protein] + L-leucyl-tRNA(Leu) = N-terminal L-leucyl-L-aspartyl-[protein] + tRNA(Leu) + H(+). Its function is as follows. Functions in the N-end rule pathway of protein degradation where it conjugates Leu from its aminoacyl-tRNA to the N-termini of proteins containing an N-terminal aspartate or glutamate. In Vibrio vulnificus (strain YJ016), this protein is Aspartate/glutamate leucyltransferase.